The following is a 551-amino-acid chain: MAAKDVLFGSDARERMLRGVDILANAVKVTLGPKGRNVVIEKSFGAPRTTKDGVSVAKEIELADKFENMGAQMLREVASKTNDVAGDGTTTATVLAQSIVREGMKSVAAGMNPMDLKRGIDKAVAIVMDDIKASSTPVKDSSEVAQVGTISANGASDIGEMIAKAMDKVGKEGVITVEEAKSLETELDVVEGMQFDRGYLSPYFITDADKMQVEMEEPYILLFEKKLTSLQPMLPILEAVVQSSRPLLIIAEDVEGEALATLVVNKLRGGLKIAAVKAPGFGDRRKAMLEDLAILTGGQVISEDLGIKLETVTLDMLGSAKRVNITKDDTTIVDGVGDKAQIEARVTQIRRQSEETTSDYDREKLQERLAKLAGGVAVIKVGGATEIEVKEKKDRVDDALNATRAAVEEGIVPGGGVALLKASAKLAGLEGDNADQTQGIAIVARALQSPIRQIATNSGVEGSIVVGKVMENPSATFGFNAQTEEYGDMLAFGVIDPAKVVRTALQDAASVASLLITTEAAVADAPKEEGAGGGMPDMGGMGGMGGMGGMM.

Residues 30–33 (TLGP), lysine 51, 87–91 (DGTTT), glycine 415, and aspartate 496 contribute to the ATP site.

It belongs to the chaperonin (HSP60) family. In terms of assembly, forms a cylinder of 14 subunits composed of two heptameric rings stacked back-to-back. Interacts with the co-chaperonin GroES.

The protein resides in the cytoplasm. It carries out the reaction ATP + H2O + a folded polypeptide = ADP + phosphate + an unfolded polypeptide.. In terms of biological role, together with its co-chaperonin GroES, plays an essential role in assisting protein folding. The GroEL-GroES system forms a nano-cage that allows encapsulation of the non-native substrate proteins and provides a physical environment optimized to promote and accelerate protein folding. The sequence is that of Chaperonin GroEL from Maricaulis maris (strain MCS10) (Caulobacter maris).